Reading from the N-terminus, the 434-residue chain is MKMKAKWLPIAAAVTAALASQAAFAVDFHGYFRSGVGVSSDGDMQTLSKQKVGRLGNEDDTYGEVQLGQEVFNKDGKTFYVDSMFAMIPNGSNDWEGTGSVCNFDEKQCSGDSEFALRQFNVQAKGLLGFAPEATLWAGKRYYQRHDIHISDFYYWNISGAGAGIEGVQAGPGKISFAWVRNDRGWDGKDGWTKFEGMDVNTLDLRYAGIPLWQDASLEVGVDYAIANPTDAQKDSSNVQYKNAKDGVMLTAELTQGIFGGFNKTVLQYGTEGYSKTMAFYGDGSWYGAEAKDGADGFRIINHGVIPMGNSWEMGHQLVYGVGNDMWDGNDKWETMSVVARPMYKWDDFNKTIFEGGYFKDKNKSTNGSSLEDSGYKLTLSQTWSAGSSFWARPEIRVFTSYAALDDNDMAGTPYNSKTSKDTWNFGVQAEAWW.

Residues 1-25 (MKMKAKWLPIAAAVTAALASQAAFA) form the signal peptide.

Belongs to the porin LamB (TC 1.B.3) family. Homotrimer formed of three 18-stranded antiparallel beta-barrels, containing three independent channels.

Its subcellular location is the cell outer membrane. It carries out the reaction beta-maltose(in) = beta-maltose(out). Involved in the transport of maltose and maltodextrins. The chain is Maltoporin from Aeromonas hydrophila.